Here is a 156-residue protein sequence, read N- to C-terminus: MPRRRVAAKREVLADPKYGSQILAKFMNHVMESGKKAVAERIVYGALDKVKERGKADPLETFEKALDAIAPLVEVKSRRVGGATYQVPVEVRPSRRNALAMRWLVDFARKRGEKSMALRLAGELLDAAEGKGAAVKKREDVHRMAEANKAFSHYRF.

It belongs to the universal ribosomal protein uS7 family. Part of the 30S ribosomal subunit. Contacts proteins S9 and S11.

One of the primary rRNA binding proteins, it binds directly to 16S rRNA where it nucleates assembly of the head domain of the 30S subunit. Is located at the subunit interface close to the decoding center, probably blocks exit of the E-site tRNA. The polypeptide is Small ribosomal subunit protein uS7 (Pseudomonas aeruginosa (strain LESB58)).